Reading from the N-terminus, the 157-residue chain is Class-10 pathogenesis-related protein 1 (157 aa).

The protein belongs to the BetVI family. In terms of tissue distribution, expressed in roots. Detected in nodules and leaves, but not in stems and flowers.

The chain is Class-10 pathogenesis-related protein 1 (PR10-1) from Medicago truncatula (Barrel medic).